The chain runs to 516 residues: 3-ketoacyl-CoA synthase 4 (516 aa).

Transmembrane regions (helical) follow at residues 48 to 68 (LISNLLTLCLFPLAVVISVEA) and 87 to 107 (LVSIIICSAILVFGLTVYVMT). One can recognise an FAE domain in the interval 104-393 (YVMTRPRPVY…FFMTLVVKKL (290 aa)). Residues C248, H327, H411, H415, H444, and N448 contribute to the active site.

The protein belongs to the thiolase-like superfamily. Chalcone/stilbene synthases family. In terms of tissue distribution, expressed at low levels in siliques, flowers, leaves and stems.

It localises to the membrane. The catalysed reaction is a very-long-chain acyl-CoA + malonyl-CoA + H(+) = a very-long-chain 3-oxoacyl-CoA + CO2 + CoA. It participates in lipid metabolism; fatty acid biosynthesis. This Arabidopsis thaliana (Mouse-ear cress) protein is 3-ketoacyl-CoA synthase 4.